The sequence spans 309 residues: tRNA uridine(34) hydroxylase (309 aa).

Positions 130–224 constitute a Rhodanese domain; sequence SDPDTIVIDT…YLEEVPQEES (95 aa). Cys184 (cysteine persulfide intermediate) is an active-site residue.

The protein belongs to the TrhO family.

The catalysed reaction is uridine(34) in tRNA + AH2 + O2 = 5-hydroxyuridine(34) in tRNA + A + H2O. Its function is as follows. Catalyzes oxygen-dependent 5-hydroxyuridine (ho5U) modification at position 34 in tRNAs. In Rhizobium etli (strain ATCC 51251 / DSM 11541 / JCM 21823 / NBRC 15573 / CFN 42), this protein is tRNA uridine(34) hydroxylase.